A 129-amino-acid polypeptide reads, in one-letter code: uncharacterized protein (129 aa).

The protein localises to the cytoplasm. It is found in the cytosol. The protein resides in the nucleus. This is an uncharacterized protein from Schizosaccharomyces pombe (strain 972 / ATCC 24843) (Fission yeast).